A 259-amino-acid chain; its full sequence is 3-dehydroquinate dehydratase (259 aa).

3-dehydroquinate is bound by residues 50–52 (EWR) and arginine 86. Histidine 147 serves as the catalytic Proton donor/acceptor. The active-site Schiff-base intermediate with substrate is lysine 174. 3-dehydroquinate-binding residues include arginine 216, serine 235, and glutamine 239.

This sequence belongs to the type-I 3-dehydroquinase family. In terms of assembly, homodimer.

The enzyme catalyses 3-dehydroquinate = 3-dehydroshikimate + H2O. The protein operates within metabolic intermediate biosynthesis; chorismate biosynthesis; chorismate from D-erythrose 4-phosphate and phosphoenolpyruvate: step 3/7. In terms of biological role, involved in the third step of the chorismate pathway, which leads to the biosynthesis of aromatic amino acids. Catalyzes the cis-dehydration of 3-dehydroquinate (DHQ) and introduces the first double bond of the aromatic ring to yield 3-dehydroshikimate. The chain is 3-dehydroquinate dehydratase from Geobacillus sp. (strain WCH70).